A 393-amino-acid chain; its full sequence is Riboflavin biosynthesis protein RibBA (393 aa).

The segment at 1–200 (MQFDNIDSAL…IDDLIEYRKK (200 aa)) is DHBP synthase. Residues 27-28 (RE), aspartate 32, 139-143 (RNGHT), and glutamate 163 each bind D-ribulose 5-phosphate. Glutamate 28 is a Mg(2+) binding site. Residue histidine 142 coordinates Mg(2+). A GTP cyclohydrolase II region spans residues 201-393 (LEPEIEFKAK…TKKIKMGHLI (193 aa)). 249 to 253 (RLHSA) provides a ligand contact to GTP. Residues cysteine 254, cysteine 265, and cysteine 267 each coordinate Zn(2+). GTP is bound by residues glutamine 270, 291-293 (EGR), and threonine 313. Aspartate 325 (proton acceptor; for GTP cyclohydrolase activity) is an active-site residue. The Nucleophile; for GTP cyclohydrolase activity role is filled by arginine 327. Positions 348 and 353 each coordinate GTP.

The protein in the N-terminal section; belongs to the DHBP synthase family. In the C-terminal section; belongs to the GTP cyclohydrolase II family. Mg(2+) is required as a cofactor. It depends on Mn(2+) as a cofactor. Requires Zn(2+) as cofactor.

The enzyme catalyses D-ribulose 5-phosphate = (2S)-2-hydroxy-3-oxobutyl phosphate + formate + H(+). The catalysed reaction is GTP + 4 H2O = 2,5-diamino-6-hydroxy-4-(5-phosphoribosylamino)-pyrimidine + formate + 2 phosphate + 3 H(+). It functions in the pathway cofactor biosynthesis; riboflavin biosynthesis; 2-hydroxy-3-oxobutyl phosphate from D-ribulose 5-phosphate: step 1/1. The protein operates within cofactor biosynthesis; riboflavin biosynthesis; 5-amino-6-(D-ribitylamino)uracil from GTP: step 1/4. In terms of biological role, catalyzes the conversion of D-ribulose 5-phosphate to formate and 3,4-dihydroxy-2-butanone 4-phosphate. Catalyzes the conversion of GTP to 2,5-diamino-6-ribosylamino-4(3H)-pyrimidinone 5'-phosphate (DARP), formate and pyrophosphate. In Staphylococcus aureus (strain Mu50 / ATCC 700699), this protein is Riboflavin biosynthesis protein RibBA.